The following is a 290-amino-acid chain: NAD kinase (290 aa).

The active-site Proton acceptor is the D73. Residues 73-74, 147-148, R158, R175, D177, 188-193, and Q246 each bind NAD(+); these read DG, ND, and TAYALS.

It belongs to the NAD kinase family. A divalent metal cation serves as cofactor.

The protein localises to the cytoplasm. The enzyme catalyses NAD(+) + ATP = ADP + NADP(+) + H(+). In terms of biological role, involved in the regulation of the intracellular balance of NAD and NADP, and is a key enzyme in the biosynthesis of NADP. Catalyzes specifically the phosphorylation on 2'-hydroxyl of the adenosine moiety of NAD to yield NADP. The polypeptide is NAD kinase (Thiobacillus denitrificans (strain ATCC 25259 / T1)).